A 176-amino-acid polypeptide reads, in one-letter code: Peptide deformylase 2 (176 aa).

Fe cation contacts are provided by C99 and H141. E142 is a catalytic residue. H145 is a binding site for Fe cation.

Belongs to the polypeptide deformylase family. Fe(2+) is required as a cofactor.

It catalyses the reaction N-terminal N-formyl-L-methionyl-[peptide] + H2O = N-terminal L-methionyl-[peptide] + formate. In terms of biological role, removes the formyl group from the N-terminal Met of newly synthesized proteins. Requires at least a dipeptide for an efficient rate of reaction. N-terminal L-methionine is a prerequisite for activity but the enzyme has broad specificity at other positions. In Bordetella bronchiseptica (strain ATCC BAA-588 / NCTC 13252 / RB50) (Alcaligenes bronchisepticus), this protein is Peptide deformylase 2.